A 380-amino-acid polypeptide reads, in one-letter code: Chaperone protein DnaJ (380 aa).

The J domain maps to 5–70 (DYYEILGVAK…QKRAAYDQYG (66 aa)). The CR-type zinc-finger motif lies at 135–213 (GVSKEIRIPT…CHGHGRVEKS (79 aa)). Residues C148, C151, C165, C168, C187, C190, C201, and C204 each coordinate Zn(2+). 4 CXXCXGXG motif repeats span residues 148 to 155 (CGVCHGSG), 165 to 172 (CSTCHGAG), 187 to 194 (CPTCHGRG), and 201 to 208 (CNACHGHG).

It belongs to the DnaJ family. As to quaternary structure, homodimer. The cofactor is Zn(2+).

Its subcellular location is the cytoplasm. Its function is as follows. Participates actively in the response to hyperosmotic and heat shock by preventing the aggregation of stress-denatured proteins and by disaggregating proteins, also in an autonomous, DnaK-independent fashion. Unfolded proteins bind initially to DnaJ; upon interaction with the DnaJ-bound protein, DnaK hydrolyzes its bound ATP, resulting in the formation of a stable complex. GrpE releases ADP from DnaK; ATP binding to DnaK triggers the release of the substrate protein, thus completing the reaction cycle. Several rounds of ATP-dependent interactions between DnaJ, DnaK and GrpE are required for fully efficient folding. Also involved, together with DnaK and GrpE, in the DNA replication of plasmids through activation of initiation proteins. The polypeptide is Chaperone protein DnaJ (Erwinia tasmaniensis (strain DSM 17950 / CFBP 7177 / CIP 109463 / NCPPB 4357 / Et1/99)).